A 491-amino-acid chain; its full sequence is 3-octaprenyl-4-hydroxybenzoate carboxy-lyase (491 aa).

Mn(2+) is bound at residue asparagine 176. Residues 179–181 (IYR), 193–195 (RWL), and 198–199 (RG) each bind prenylated FMN. Glutamate 242 contributes to the Mn(2+) binding site. Aspartate 291 acts as the Proton donor in catalysis.

This sequence belongs to the UbiD family. As to quaternary structure, homohexamer. It depends on prenylated FMN as a cofactor. Requires Mn(2+) as cofactor.

It localises to the cell membrane. The enzyme catalyses a 4-hydroxy-3-(all-trans-polyprenyl)benzoate + H(+) = a 2-(all-trans-polyprenyl)phenol + CO2. The protein operates within cofactor biosynthesis; ubiquinone biosynthesis. In terms of biological role, catalyzes the decarboxylation of 3-octaprenyl-4-hydroxy benzoate to 2-octaprenylphenol, an intermediate step in ubiquinone biosynthesis. The polypeptide is 3-octaprenyl-4-hydroxybenzoate carboxy-lyase (Chromobacterium violaceum (strain ATCC 12472 / DSM 30191 / JCM 1249 / CCUG 213 / NBRC 12614 / NCIMB 9131 / NCTC 9757 / MK)).